A 148-amino-acid chain; its full sequence is Cathelicidin-1 (148 aa).

Positions 1 to 17 (MLSCWVLLLALLGGACA) are cleaved as a signal peptide. The propeptide occupies 18-122 (LPAPLGYSQA…TCVDSMADPV (105 aa)). Cystine bridges form between C75/C86 and C97/C114.

It belongs to the cathelicidin family. Detected in gizzard, liver, small intestine, large intestine, cloaca, bursa of Fabricius, gall bladder, lung, trachea, kidney, testis and bone marrow.

It localises to the secreted. In terms of biological role, binds bacterial lipopolysaccharide (LPS). Has potent antimicrobial activity against Gram-positive and Gram-negative bacteria (in vitro). Has hemolytic activity (in vitro). May play a role in the innate immune response. The chain is Cathelicidin-1 (CATHL1) from Gallus gallus (Chicken).